A 414-amino-acid polypeptide reads, in one-letter code: 25-hydroxycholesterol 7-alpha-hydroxylase (414 aa).

A heme-binding site is contributed by Cys-354.

This sequence belongs to the cytochrome P450 family. The cofactor is heme. Highly expressed in brain; also expressed in liver and kidney.

It is found in the endoplasmic reticulum membrane. The protein resides in the microsome membrane. It catalyses the reaction 25-hydroxycholesterol + reduced [NADPH--hemoprotein reductase] + O2 = 7alpha,25-dihydroxycholesterol + oxidized [NADPH--hemoprotein reductase] + H2O + H(+). The enzyme catalyses (25R)-cholest-5-ene-3beta,26-diol + reduced [NADPH--hemoprotein reductase] + O2 = (25R)-cholest-5-en-3beta,7alpha,26-triol + oxidized [NADPH--hemoprotein reductase] + H2O + H(+). It functions in the pathway lipid metabolism; bile acid biosynthesis. Its function is as follows. Oxysterol 7alpha-hydroxylase that mediates formation of 7-alpha,25-dihydroxycholesterol (7-alpha,25-OHC) from 25-hydroxycholesterol. Plays a key role in cell positioning and movement in lymphoid tissues: 7-alpha,25-dihydroxycholesterol (7-alpha,25-OHC) acts as a ligand for the G protein-coupled receptor GPR183/EBI2, a chemotactic receptor for a number of lymphoid cells. In Rattus norvegicus (Rat), this protein is 25-hydroxycholesterol 7-alpha-hydroxylase (Cyp7b1).